The primary structure comprises 227 residues: 2-C-methyl-D-erythritol 4-phosphate cytidylyltransferase (227 aa).

Belongs to the IspD/TarI cytidylyltransferase family. IspD subfamily.

The enzyme catalyses 2-C-methyl-D-erythritol 4-phosphate + CTP + H(+) = 4-CDP-2-C-methyl-D-erythritol + diphosphate. It functions in the pathway isoprenoid biosynthesis; isopentenyl diphosphate biosynthesis via DXP pathway; isopentenyl diphosphate from 1-deoxy-D-xylulose 5-phosphate: step 2/6. Catalyzes the formation of 4-diphosphocytidyl-2-C-methyl-D-erythritol from CTP and 2-C-methyl-D-erythritol 4-phosphate (MEP). The chain is 2-C-methyl-D-erythritol 4-phosphate cytidylyltransferase from Bordetella parapertussis (strain 12822 / ATCC BAA-587 / NCTC 13253).